The following is a 147-amino-acid chain: MKGQRNIGMVAHDERKEDLLDWVQHNLQALIPHRIFATGTTGGLLRQRFGDLTITPMKSGPLGGDQQLGSMIAEGRLDMLFFLIDPMAPHPHDVDIKALLRLAVLYNIPAAYNRSTADFLITSPFMTGEYIPEIKDYTPYVKRLGAK.

The 147-residue stretch at 1–147 (MKGQRNIGMV…TPYVKRLGAK (147 aa)) folds into the MGS-like domain. Residues H12, K16, 38-41 (TGTT), and 59-60 (SG) each bind substrate. The active-site Proton donor/acceptor is the D65. H92 provides a ligand contact to substrate.

It belongs to the methylglyoxal synthase family.

The catalysed reaction is dihydroxyacetone phosphate = methylglyoxal + phosphate. Functionally, catalyzes the formation of methylglyoxal from dihydroxyacetone phosphate. The chain is Methylglyoxal synthase from Oleidesulfovibrio alaskensis (strain ATCC BAA-1058 / DSM 17464 / G20) (Desulfovibrio alaskensis).